We begin with the raw amino-acid sequence, 83 residues long: SPbeta prophage-derived uncharacterized protein YopE (83 aa).

Transmembrane regions (helical) follow at residues 5–25 (AYFL…FIFV) and 60–80 (VIAF…TKLF).

It is found in the cell membrane. This chain is SPbeta prophage-derived uncharacterized protein YopE (yopE), found in Bacillus subtilis (strain 168).